Here is a 77-residue protein sequence, read N- to C-terminus: Large ribosomal subunit protein uL29 (77 aa).

This sequence belongs to the universal ribosomal protein uL29 family.

The sequence is that of Large ribosomal subunit protein uL29 from Gluconobacter oxydans (strain 621H) (Gluconobacter suboxydans).